Here is a 357-residue protein sequence, read N- to C-terminus: Probable cinnamyl alcohol dehydrogenase 1 (357 aa).

Cys47 lines the Zn(2+) pocket. An NADP(+)-binding site is contributed by Thr49. Residues His69, Glu70, Cys100, Cys103, Cys106, Cys114, and Cys163 each coordinate Zn(2+). Residues Thr167, Gly188–Gly193, Ser211–Lys216, Thr251, Gly275, and Ser298–Ile300 each bind NADP(+).

It belongs to the zinc-containing alcohol dehydrogenase family. Homodimer. It depends on Zn(2+) as a cofactor. In terms of processing, the N-terminus is blocked.

It carries out the reaction (E)-cinnamyl alcohol + NADP(+) = (E)-cinnamaldehyde + NADPH + H(+). It catalyses the reaction (E)-coniferol + NADP(+) = (E)-coniferaldehyde + NADPH + H(+). The enzyme catalyses (E)-sinapyl alcohol + NADP(+) = (E)-sinapaldehyde + NADPH + H(+). The catalysed reaction is (E)-4-coumaroyl alcohol + NADP(+) = (E)-4-coumaraldehyde + NADPH + H(+). It carries out the reaction (E)-caffeyl alcohol + NADP(+) = (E)-caffeyl aldehyde + NADPH + H(+). It functions in the pathway aromatic compound metabolism; phenylpropanoid biosynthesis. Involved in lignin biosynthesis. Catalyzes the final step specific for the production of lignin monomers. Catalyzes the NADPH-dependent reduction of coniferaldehyde, 5-hydroxyconiferaldehyde, sinapaldehyde, 4-coumaraldehyde and caffeyl aldehyde to their respective alcohols. In Nicotiana tabacum (Common tobacco), this protein is Probable cinnamyl alcohol dehydrogenase 1.